The sequence spans 1218 residues: Protein STICHEL (1218 aa).

A disordered region spans residues 24–136; sequence AGRVLRDPGT…SDARNGGDSY (113 aa). Composition is skewed to polar residues over residues 32-46, 54-73, and 86-95; these read GTTSSWKSPLDSSRS, ASRNGGSSSQFPIRGESSTN, and WKTQKSSSEK. A Bipartite nuclear localization signal motif is present at residues 163–180; that stretch reads RKSNVGSCKKKSKKKISS. 2 consecutive short sequence motifs (PEST) follow at residues 273-304 and 425-449; these read RNPSTVGSWDGTTTSVNDGDDELDDNLDLPGR and RSQDGLEAVALDGEEEEGSTPETIR. Residue 490-497 participates in ATP binding; that stretch reads GPRGTGKT. Residues C509, C518, C521, and C524 each contribute to the Zn(2+) site. The stretch at 762–788 forms a coiled coil; sequence EADMEGLKHALKLLSEAEKQLRVSNDR. The segment at 802–828 is disordered; sequence MPSPGTTHTGSSRRQSSRATDDDPASV. The segment covering 804–819 has biased composition (polar residues); sequence SPGTTHTGSSRRQSSR. 2 short sequence motifs (bipartite nuclear localization signal) span residues 1178-1195 and 1196-1213; these read RRSKSKQVKGTPVRSRRN and RKSRFSLFNGCAKPRKAE.

The protein belongs to the DnaX/STICHEL family. Interacts with BLT. In terms of tissue distribution, ubiquitous.

The protein resides in the nucleus. Functionally, acts as a key regulator of trichome branching through an endoreduplication-independent pathway. This is Protein STICHEL (STI) from Arabidopsis thaliana (Mouse-ear cress).